The sequence spans 463 residues: L-seryl-tRNA(Sec) selenium transferase (463 aa).

The residue at position 295 (Lys-295) is an N6-(pyridoxal phosphate)lysine.

The protein belongs to the SelA family. Homodecamer; pentamer of dimers. Binds only one seryl-tRNA(Sec) per dimer. The cofactor is pyridoxal 5'-phosphate.

It is found in the cytoplasm. It catalyses the reaction L-seryl-tRNA(Sec) + selenophosphate + H(+) = L-selenocysteinyl-tRNA(Sec) + phosphate. Its pathway is aminoacyl-tRNA biosynthesis; selenocysteinyl-tRNA(Sec) biosynthesis; selenocysteinyl-tRNA(Sec) from L-seryl-tRNA(Sec) (bacterial route): step 1/1. Its function is as follows. Converts seryl-tRNA(Sec) to selenocysteinyl-tRNA(Sec) required for selenoprotein biosynthesis. The protein is L-seryl-tRNA(Sec) selenium transferase of Escherichia coli (strain K12 / MC4100 / BW2952).